A 261-amino-acid chain; its full sequence is ATP synthase subunit a (261 aa).

A run of 6 helical transmembrane segments spans residues 45 to 65 (ITNVTMWMAIAVLVIAAILVL), 107 to 127 (VMTLFLFVLCGNVLGLLPLSF), 133 to 153 (MAVTVPLALMVFVGVTALGFM), 162 to 182 (MFWVTSAPLAIRPVLAVIEVI), 209 to 229 (IAGFASIVVVSPVVVGAVTAI), and 232 to 252 (LELLVAVVQAYVFTILTCVYL).

Belongs to the ATPase A chain family. In terms of assembly, F-type ATPases have 2 components, CF(1) - the catalytic core - and CF(0) - the membrane proton channel. CF(1) has five subunits: alpha(3), beta(3), gamma(1), delta(1), epsilon(1). CF(0) has four main subunits: a, b, b' and c.

Its subcellular location is the cell inner membrane. Key component of the proton channel; it plays a direct role in the translocation of protons across the membrane. This is ATP synthase subunit a from Cereibacter sphaeroides (strain ATCC 17029 / ATH 2.4.9) (Rhodobacter sphaeroides).